Consider the following 258-residue polypeptide: L-aminoadipate-semialdehyde dehydrogenase-phosphopantetheinyl transferase (258 aa).

Belongs to the P-Pant transferase superfamily. AcpS family.

The enzyme catalyses apo-[ACP] + CoA = holo-[ACP] + adenosine 3',5'-bisphosphate + H(+). Catalyzes the transfer of a 4'-phosphopantetheine moiety from coenzyme A to a serine residue of acceptor proteins, such as alpha-aminoadipate reductase. Necessary for alpha-aminoadipate reductase activity. The protein is L-aminoadipate-semialdehyde dehydrogenase-phosphopantetheinyl transferase (LYS5) of Candida glabrata (strain ATCC 2001 / BCRC 20586 / JCM 3761 / NBRC 0622 / NRRL Y-65 / CBS 138) (Yeast).